Consider the following 63-residue polypeptide: Large ribosomal subunit protein bL28 (63 aa).

The interval M1 to H20 is disordered.

The protein belongs to the bacterial ribosomal protein bL28 family.

This Campylobacter fetus subsp. fetus (strain 82-40) protein is Large ribosomal subunit protein bL28.